The following is a 203-amino-acid chain: UDP-N-acetylglucosamine transferase subunit ALG13 (203 aa).

This sequence belongs to the glycosyltransferase 28 family. As to quaternary structure, heterodimer with ALG14 to form a functional enzyme.

It localises to the endoplasmic reticulum. It carries out the reaction an N-acetyl-alpha-D-glucosaminyl-diphospho-di-trans,poly-cis-dolichol + UDP-N-acetyl-alpha-D-glucosamine = an N,N'-diacetylchitobiosyl-diphospho-di-trans,poly-cis-dolichol + UDP + H(+). Involved in protein N-glycosylation. Essential for the second step of the dolichol-linked oligosaccharide pathway. The polypeptide is UDP-N-acetylglucosamine transferase subunit ALG13 (ALG13) (Eremothecium gossypii (strain ATCC 10895 / CBS 109.51 / FGSC 9923 / NRRL Y-1056) (Yeast)).